A 63-amino-acid chain; its full sequence is Cytochrome c oxidase subunit 5C (63 aa).

Residues Val-16–Trp-34 traverse the membrane as a helical segment.

The protein belongs to the cytochrome c oxidase subunit 5C family.

The protein localises to the mitochondrion inner membrane. Functionally, this protein is one of the nuclear-coded polypeptide chains of cytochrome c oxidase, the terminal oxidase in mitochondrial electron transport. The protein is Cytochrome c oxidase subunit 5C (COX5C) of Oryza sativa subsp. japonica (Rice).